A 180-amino-acid chain; its full sequence is Crossover junction endodeoxyribonuclease RuvC (180 aa).

Active-site residues include Asp9, Glu74, and Asp146. Mg(2+) contacts are provided by Asp9, Glu74, and Asp146.

The protein belongs to the RuvC family. Homodimer which binds Holliday junction (HJ) DNA. The HJ becomes 2-fold symmetrical on binding to RuvC with unstacked arms; it has a different conformation from HJ DNA in complex with RuvA. In the full resolvosome a probable DNA-RuvA(4)-RuvB(12)-RuvC(2) complex forms which resolves the HJ. It depends on Mg(2+) as a cofactor.

It is found in the cytoplasm. The catalysed reaction is Endonucleolytic cleavage at a junction such as a reciprocal single-stranded crossover between two homologous DNA duplexes (Holliday junction).. In terms of biological role, the RuvA-RuvB-RuvC complex processes Holliday junction (HJ) DNA during genetic recombination and DNA repair. Endonuclease that resolves HJ intermediates. Cleaves cruciform DNA by making single-stranded nicks across the HJ at symmetrical positions within the homologous arms, yielding a 5'-phosphate and a 3'-hydroxyl group; requires a central core of homology in the junction. The consensus cleavage sequence is 5'-(A/T)TT(C/G)-3'. Cleavage occurs on the 3'-side of the TT dinucleotide at the point of strand exchange. HJ branch migration catalyzed by RuvA-RuvB allows RuvC to scan DNA until it finds its consensus sequence, where it cleaves and resolves the cruciform DNA. The chain is Crossover junction endodeoxyribonuclease RuvC from Methylobacillus flagellatus (strain ATCC 51484 / DSM 6875 / VKM B-1610 / KT).